Consider the following 558-residue polypeptide: Formate--tetrahydrofolate ligase (558 aa).

ATP is bound at residue 66–73; the sequence is TPAGEGKT.

The protein belongs to the formate--tetrahydrofolate ligase family.

The catalysed reaction is (6S)-5,6,7,8-tetrahydrofolate + formate + ATP = (6R)-10-formyltetrahydrofolate + ADP + phosphate. It participates in one-carbon metabolism; tetrahydrofolate interconversion. This is Formate--tetrahydrofolate ligase from Neisseria meningitidis serogroup C (strain 053442).